The primary structure comprises 380 residues: Glucose-1-phosphate adenylyltransferase (380 aa).

Alpha-D-glucose 1-phosphate is bound by residues Gly-164, 179 to 180 (EK), and Ser-190.

It belongs to the bacterial/plant glucose-1-phosphate adenylyltransferase family. Homotetramer.

It carries out the reaction alpha-D-glucose 1-phosphate + ATP + H(+) = ADP-alpha-D-glucose + diphosphate. It participates in glycan biosynthesis; glycogen biosynthesis. In terms of biological role, involved in the biosynthesis of ADP-glucose, a building block required for the elongation reactions to produce glycogen. Catalyzes the reaction between ATP and alpha-D-glucose 1-phosphate (G1P) to produce pyrophosphate and ADP-Glc. In Streptococcus pneumoniae (strain Hungary19A-6), this protein is Glucose-1-phosphate adenylyltransferase.